The sequence spans 215 residues: UPF0173 metal-dependent hydrolase NEQ378 (215 aa).

This sequence belongs to the UPF0173 family.

The polypeptide is UPF0173 metal-dependent hydrolase NEQ378 (Nanoarchaeum equitans (strain Kin4-M)).